Here is a 234-residue protein sequence, read N- to C-terminus: KAQEPWFGIEQEYTLLNSVTKWPLGWPKGGYPAGQGPYYCSVGAGRSIGRDIPEVHYRCCLHAGIQISGVNGEVLPSQWEYQVGPVEGIAMGDQMWMSRYLMYRVAELFNVEVTFDPKPIPGDWNGSGGHVNFSNRQPESPPAGKQSRSSAKKLGKRHRWHIAAYGEGNERRLTGKHETSSMNDFSWGVANRGCSIRVGRMVPVEKCGYYEDRRPSSNLDPYVVTRLLVETTLL.

Residues 1–234 enclose the GS catalytic domain; it reads KAQEPWFGIE…TRLLVETTLL (234 aa). The tract at residues 126-157 is disordered; the sequence is GSGGHVNFSNRQPESPPAGKQSRSSAKKLGKR.

Belongs to the glutamine synthetase family. Homooctamer.

It localises to the cytoplasm. The catalysed reaction is L-glutamate + NH4(+) + ATP = L-glutamine + ADP + phosphate + H(+). This is Glutamine synthetase from Dunaliella salina (Green alga).